The following is a 245-amino-acid chain: MRYKITVEYNGSSFSGWQKQQHSANSIQEKIENAIFNFSGEKIALYCGGRTDAGVHALGQVAHFDMEKECELYRIRNAINYHLKSIPIVVLNAEVVDDAFHARFSAKKRYYEYRIVNRYAPAALETGYVWQVFSPLDVNIMREAAKHLLGKHDLSSFRSKDCHAANPIRTIDDIDIVQNGNHIHIKISAISFLHNQVRIIAGTLVEFGKNRTNPQEMLHILSQCKRSAAGVTAPPFGLYLVKIDY.

Asp52 serves as the catalytic Nucleophile. Substrate is bound at residue Tyr111.

Belongs to the tRNA pseudouridine synthase TruA family. In terms of assembly, homodimer.

The enzyme catalyses uridine(38/39/40) in tRNA = pseudouridine(38/39/40) in tRNA. Its function is as follows. Formation of pseudouridine at positions 38, 39 and 40 in the anticodon stem and loop of transfer RNAs. This Wolbachia sp. subsp. Drosophila simulans (strain wRi) protein is tRNA pseudouridine synthase A.